Here is a 727-residue protein sequence, read N- to C-terminus: Putative E3 ubiquitin-protein ligase UNKL (727 aa).

The interval 1–21 (MPSVSKAAAAALSGSPPQTEK) is disordered. 4 C3H1-type zinc fingers span residues 75 to 104 (YSPD…HRTT), 115 to 145 (YYKT…HGPL), 243 to 277 (QYRS…HSRT), and 285 to 313 (IYKS…HTEK). Polar residues predominate over residues 330–339 (STSAYSSQPG). Disordered regions lie at residues 330–360 (STSA…DSKQ), 446–514 (LTGP…ATLG), and 543–562 (SPSP…SPNS). A compositionally biased stretch (low complexity) spans 463–495 (SLPRSPSLHSSSSLSTSPLSSLSQSLSGPLVSS). The RING-type zinc finger occupies 686–721 (CVACQERAHGTVLRPCQHRVLCEPCAASTPECPYCK).

This sequence belongs to the unkempt family. As to quaternary structure, interacts with the GTP-bound form of Rac1. Interacts with Baf60b/Smarcd2. Ubiquitination is enhanced by activated Rac1. The presence of the RING finger domain is not essential for ubiquitination to occur. Ubiquitous.

It localises to the cytoplasm. It is found in the nucleus. Its pathway is protein modification; protein ubiquitination. In terms of biological role, may participate in a protein complex showing an E3 ligase activity regulated by Rac1. Ubiquitination is directed towards itself and possibly other substrates, such as Baf60b/Smarcd2. Intrinsic E3 ligase activity has not been proven. The sequence is that of Putative E3 ubiquitin-protein ligase UNKL (Unkl) from Mus musculus (Mouse).